Here is a 104-residue protein sequence, read N- to C-terminus: Large ribosomal subunit protein uL24 (104 aa).

Belongs to the universal ribosomal protein uL24 family. As to quaternary structure, part of the 50S ribosomal subunit.

In terms of biological role, one of two assembly initiator proteins, it binds directly to the 5'-end of the 23S rRNA, where it nucleates assembly of the 50S subunit. One of the proteins that surrounds the polypeptide exit tunnel on the outside of the subunit. This is Large ribosomal subunit protein uL24 from Bradyrhizobium diazoefficiens (strain JCM 10833 / BCRC 13528 / IAM 13628 / NBRC 14792 / USDA 110).